The following is a 514-amino-acid chain: Cytochrome P450 monooxygenase aneD (514 aa).

Residues 6 to 26 traverse the membrane as a helical segment; sequence ICTLLAVIATTSLGLLFLSII. 3 N-linked (GlcNAc...) asparagine glycosylation sites follow: N113, N261, and N347. C424 is a binding site for heme.

Belongs to the cytochrome P450 family. Heme is required as a cofactor.

The protein localises to the membrane. It catalyses the reaction asperaculane D + reduced [NADPH--hemoprotein reductase] + O2 = asperaculane E + oxidized [NADPH--hemoprotein reductase] + H2O + H(+). It functions in the pathway secondary metabolite biosynthesis. Its function is as follows. Cytochrome P450 monooxygenase; part of the gene cluster that mediates the biosynthesis of aculenes, a unique type of norsesquiterpenes that contain a nordaucane skeleton linked to an L-proline moiety and are of mixed biosynthetic origin. The pathway begins with the synthesis of dauca-4,7-diene by the terpene cyclase aneC using farnesyl pyrophosphate (FPP) as substrate. The cytochrome P450 monooxygenase aneF then performs the initial oxidation at C-12 of dauca-4,7-diene to yield asperaculane D. Asperaculane D is substrate of the cytochrome P450 monooxygenase aneD for C-10 hydroxylation to yield asperaculane E. The cytochrome P450 monooxygenase aneG then converts asperaculane E into aculene D via C-2 oxidation. The monomodular nonribosomal peptide synthtase aneB adenylates L-proline and the thiohydrolase aneE transfers this activated L-proline derivative to aculenes D and C to produce respectively aculenes B and A. The dioxygenase aneA converts aculene D into aculene C, and aculene B into aculene A by introducing the 5,6-alkene moiety. Asperculanes A, B, C and F, as well as 14-prolyl asperculane C, might be shunt products of the pathway. The protein is Cytochrome P450 monooxygenase aneD of Aspergillus aculeatus (strain ATCC 16872 / CBS 172.66 / WB 5094).